The chain runs to 221 residues: Histone H1.3 (221 aa).

Over residues 1–17 (MSETAPAAPAAPAPVEK) the composition is skewed to low complexity. Positions 1–42 (MSETAPAAPAAPAPVEKTPVKKKAKKTGAAAGKRKASGPPVS) are disordered. Residue serine 2 is modified to N-acetylserine. Serine 2 carries the phosphoserine modification. Residue lysine 17 is modified to N6-acetyllysine. Threonine 18 is modified (phosphothreonine). Positions 20-36 (VKKKAKKTGAAAGKRKA) are enriched in basic residues. 3 positions are modified to N6-(beta-hydroxybutyryl)lysine: lysine 33, lysine 35, and lysine 53. The region spanning 37–110 (SGPPVSELIT…GASGSFKLNK (74 aa)) is the H15 domain. The residue at position 55 (arginine 55) is a Citrulline. An N6-(beta-hydroxybutyryl)lysine mark is found at lysine 65, lysine 86, and lysine 91. The interval 92–221 (GTLVQTKGTG…KAKKAAPRKK (130 aa)) is disordered. Serine 105 is modified (phosphoserine; by PKC). Lysine 107 and lysine 141 each carry N6-(beta-hydroxybutyryl)lysine. Composition is skewed to basic residues over residues 120–141 (KAKK…KPKK), 150–161 (KTAKKTPKKAKK), 170–187 (KVSK…KKAA), and 194–221 (KAPK…PRKK).

It belongs to the histone H1/H5 family. In terms of processing, H1 histones are progressively phosphorylated during the cell cycle, becoming maximally phosphorylated during late G2 phase and M phase, and being dephosphorylated sharply thereafter. Hydroxybutyrylation of histones is induced by starvation. Post-translationally, citrullination at Arg-55 (H1R54ci) by PADI4 takes place within the DNA-binding site of H1 and results in its displacement from chromatin and global chromatin decondensation, thereby promoting pluripotency and stem cell maintenance.

Its subcellular location is the nucleus. The protein resides in the chromosome. Functionally, histone H1 protein binds to linker DNA between nucleosomes forming the macromolecular structure known as the chromatin fiber. Histones H1 are necessary for the condensation of nucleosome chains into higher-order structured fibers. Also acts as a regulator of individual gene transcription through chromatin remodeling, nucleosome spacing and DNA methylation. The polypeptide is Histone H1.3 (Mus musculus (Mouse)).